A 469-amino-acid polypeptide reads, in one-letter code: Aspartyl/glutamyl-tRNA(Asn/Gln) amidotransferase subunit B (469 aa).

The protein belongs to the GatB/GatE family. GatB subfamily. As to quaternary structure, heterotrimer of A, B and C subunits.

It carries out the reaction L-glutamyl-tRNA(Gln) + L-glutamine + ATP + H2O = L-glutaminyl-tRNA(Gln) + L-glutamate + ADP + phosphate + H(+). It catalyses the reaction L-aspartyl-tRNA(Asn) + L-glutamine + ATP + H2O = L-asparaginyl-tRNA(Asn) + L-glutamate + ADP + phosphate + 2 H(+). Its function is as follows. Allows the formation of correctly charged Asn-tRNA(Asn) or Gln-tRNA(Gln) through the transamidation of misacylated Asp-tRNA(Asn) or Glu-tRNA(Gln) in organisms which lack either or both of asparaginyl-tRNA or glutaminyl-tRNA synthetases. The reaction takes place in the presence of glutamine and ATP through an activated phospho-Asp-tRNA(Asn) or phospho-Glu-tRNA(Gln). The chain is Aspartyl/glutamyl-tRNA(Asn/Gln) amidotransferase subunit B from Thermus thermophilus (strain ATCC BAA-163 / DSM 7039 / HB27).